The chain runs to 182 residues: Capsid protein (182 aa).

Residues 136-182 (NAPILSTLPETTVVRRRRPSGRRTPSPRRRRSQSPRRRRSQSPASSC) form a disordered region. Residues 149–175 (VRRRRPSGRRTPSPRRRRSQSPRRRRS) are compositionally biased toward basic residues. Residues 157–174 (RRTPSPRRRRSQSPRRRR) carry the Bipartite nuclear localization signal motif. Residues S161 and S169 each carry the phosphoserine; by host modification. 2 consecutive repeat copies span residues 161–168 (SPRRRRSQ) and 169–176 (SPRRRRSQ). Residues 161–176 (SPRRRRSQSPRRRRSQ) form a 2 X 8 AA repeats of S-P-R-R-R-[PR]-S-Q region. Residues 176–182 (QSPASSC) are RNA binding.

It belongs to the orthohepadnavirus core antigen family. As to quaternary structure, homodimerizes, then multimerizes. Interacts with cytosol exposed regions of viral L glycoprotein present in the reticulum-to-Golgi compartment. Interacts with human FLNB. Phosphorylated form interacts with host importin alpha; this interaction depends on the exposure of the NLS, which itself depends upon genome maturation and/or phosphorylation of the capsid protein. Interacts with host NUP153. In terms of processing, phosphorylated by host SRPK1, SRPK2, and maybe protein kinase C or GAPDH. Phosphorylation is critical for pregenomic RNA packaging. Protein kinase C phosphorylation is stimulated by HBx protein and may play a role in transport of the viral genome to the nucleus at the late step during the viral replication cycle.

The protein localises to the virion. The protein resides in the host cytoplasm. Its function is as follows. Self assembles to form an icosahedral capsid. Most capsids appear to be large particles with an icosahedral symmetry of T=4 and consist of 240 copies of capsid protein, though a fraction forms smaller T=3 particles consisting of 180 capsid proteins. Entering capsids are transported along microtubules to the nucleus. Phosphorylation of the capsid is thought to induce exposure of nuclear localization signal in the C-terminal portion of the capsid protein that allows binding to the nuclear pore complex via the importin (karyopherin-) alpha and beta. Capsids are imported in intact form through the nuclear pore into the nuclear basket, where it probably binds NUP153. Only capsids that contain the mature viral genome can release the viral DNA and capsid protein into the nucleoplasm. Immature capsids get stuck in the basket. Capsids encapsulate the pre-genomic RNA and the P protein. Pre-genomic RNA is reverse-transcribed into DNA while the capsid is still in the cytoplasm. The capsid can then either be directed to the nucleus, providing more genomes for transcription, or bud through the endoplasmic reticulum to provide new virions. This is Capsid protein from Woolly monkey hepatitis B virus (isolate Louisville) (WMHBV).